The primary structure comprises 193 residues: Probable oligoribonuclease (193 aa).

In terms of domain architecture, Exonuclease spans 15–177; it reads IIWIDCEMTG…DDIMESIAEL (163 aa). The active site involves Tyr136.

This sequence belongs to the oligoribonuclease family.

Functionally, 3'-to-5' exoribonuclease specific for small oligoribonucleotides. The chain is Probable oligoribonuclease from Caenorhabditis elegans.